The sequence spans 386 residues: Lipoyl synthase, mitochondrial (386 aa).

[4Fe-4S] cluster contacts are provided by C115, C120, C126, C146, C150, C153, and S362. One can recognise a Radical SAM core domain in the interval 131 to 351; sequence ETGTATATIM…QKLGMEMGFR (221 aa).

This sequence belongs to the radical SAM superfamily. Lipoyl synthase family. The cofactor is [4Fe-4S] cluster.

It localises to the mitochondrion. It carries out the reaction [[Fe-S] cluster scaffold protein carrying a second [4Fe-4S](2+) cluster] + N(6)-octanoyl-L-lysyl-[protein] + 2 oxidized [2Fe-2S]-[ferredoxin] + 2 S-adenosyl-L-methionine + 4 H(+) = [[Fe-S] cluster scaffold protein] + N(6)-[(R)-dihydrolipoyl]-L-lysyl-[protein] + 4 Fe(3+) + 2 hydrogen sulfide + 2 5'-deoxyadenosine + 2 L-methionine + 2 reduced [2Fe-2S]-[ferredoxin]. Its pathway is protein modification; protein lipoylation via endogenous pathway; protein N(6)-(lipoyl)lysine from octanoyl-[acyl-carrier-protein]: step 2/2. In terms of biological role, catalyzes the radical-mediated insertion of two sulfur atoms into the C-6 and C-8 positions of the octanoyl moiety bound to the lipoyl domains of lipoate-dependent enzymes, thereby converting the octanoylated domains into lipoylated derivatives. This chain is Lipoyl synthase, mitochondrial, found in Picea sitchensis (Sitka spruce).